A 312-amino-acid chain; its full sequence is Very long chain fatty acid elongase 4 (312 aa).

Asparagine 20 carries an N-linked (GlcNAc...) asparagine glycan. 7 helical membrane passes run 42 to 62, 78 to 98, 127 to 147, 165 to 185, 188 to 208, 217 to 237, and 246 to 266; these read LMQSPWPTISISTLYLLFVWL, VLIIYNFGMVLLNLFIFRELF, ALWWYFVSKGVEYLDTVFFIL, MFTLWWIGIKWVAGGQAFFGA, NSFIHVIMYSYYGLTAFGPWI, YLTMLQLVQFHVTIGHTALSL, and WMHWALIAYAISFIFLFLNFY. The span at 273–292 shows a compositional bias: polar residues; it reads PKQSKTGKTATNGISSNGVN. Positions 273 to 312 are disordered; it reads PKQSKTGKTATNGISSNGVNKSEKALENGKPQKNGKPKGE. An N-linked (GlcNAc...) asparagine glycan is attached at asparagine 292. Positions 308-312 match the Di-lysine motif motif; sequence KPKGE.

This sequence belongs to the ELO family. ELOVL4 subfamily. In terms of assembly, oligomer. In terms of processing, N-glycosylated. Expressed in the retina, exclusively in photoreceptor cells and in the brain, skin, testis and lens.

The protein resides in the endoplasmic reticulum membrane. It carries out the reaction a very-long-chain acyl-CoA + malonyl-CoA + H(+) = a very-long-chain 3-oxoacyl-CoA + CO2 + CoA. The enzyme catalyses hexacosanoyl-CoA + malonyl-CoA + H(+) = 3-oxooctacosanyol-CoA + CO2 + CoA. The catalysed reaction is octacosanoyl-CoA + malonyl-CoA + H(+) = 3-oxo-triacontanoyl-CoA + CO2 + CoA. It catalyses the reaction triacontanoyl-CoA + malonyl-CoA + H(+) = 3-oxo-dotriacontanoyl-CoA + CO2 + CoA. It carries out the reaction (19Z,22Z,25Z,28Z,31Z)-tetratriacontapentaenoyl-CoA + malonyl-CoA + H(+) = 3-oxo-(21Z,24Z,27Z,30Z,33Z)-hexatriacontapentaenoyl-CoA + CO2 + CoA. The enzyme catalyses (4Z,7Z,10Z,13Z,16Z,19Z)-docosahexaenoyl-CoA + malonyl-CoA + H(+) = 3-oxo-(6Z,9Z,12Z,15Z,18Z,21Z)-tetracosahexaenoyl-CoA + CO2 + CoA. The catalysed reaction is (7Z,10Z,13Z,16Z)-docosatetraenoyl-CoA + malonyl-CoA + H(+) = (9Z,12Z,15Z,18Z)-3-oxotetracosatetraenoyl-CoA + CO2 + CoA. It catalyses the reaction (11Z,14Z,17Z,20Z,23Z)-hexacosapentaenoyl-CoA + malonyl-CoA + H(+) = 3-oxo-(13Z,16Z,19Z,22Z,25Z)-octacosapentaenoyl-CoA + CO2 + CoA. It carries out the reaction (13Z,16Z,19Z,22Z,25Z)-octacosapentaenoyl-CoA + malonyl-CoA + H(+) = 3-oxo-(15Z,18Z,21Z,24Z,27Z)-triacontapentaenoyl-CoA + CO2 + CoA. The enzyme catalyses (15Z,18Z,21Z,24Z,27Z)-triacontapentaenoyl-CoA + malonyl-CoA + H(+) = 3-oxo-(17Z,20Z,23Z,26Z,29Z)-dotriacontapentaenoyl-CoA + CO2 + CoA. The catalysed reaction is (17Z,20Z,23Z,26Z,29Z)-dotriacontapentaenoyl-CoA + malonyl-CoA + H(+) = 3-oxo-(19Z,22Z,25Z,28Z,31Z)-tetratriacontapentaenoyl-CoA + CO2 + CoA. It catalyses the reaction (21Z,24Z,27Z,30Z,33Z)-hexatriacontapentaenoyl-CoA + malonyl-CoA + H(+) = 3-oxo-(23Z,26Z,29Z,32Z,35Z)-octatriacontapentaenoyl-CoA + CO2 + CoA. It carries out the reaction (11Z,14Z,17Z,20Z)-hexacosatetraenoyl-CoA + malonyl-CoA + H(+) = (13Z,16Z,19Z,22Z)-3-oxooctacosatetraenoyl-CoA + CO2 + CoA. The enzyme catalyses (13Z,16Z,19Z,22Z)-octacosatetraenoyl-CoA + malonyl-CoA + H(+) = 3-oxo-(15Z,18Z,21Z,24Z)-triacontatetraenoyl-CoA + CO2 + CoA. The catalysed reaction is (15Z,18Z,21Z,24Z)-triacontatetraenoyl-CoA + malonyl-CoA + H(+) = 3-oxo-(17Z,20Z,23Z,26Z)-dotriacontatetraenoyl-CoA + CO2 + CoA. It catalyses the reaction (17Z,20Z,23Z,26Z)-dotriacontatetraenoyl-CoA + malonyl-CoA + H(+) = 3-oxo-(19Z,22Z,25Z,28Z)-tetratriacontatetraenoyl-CoA + CO2 + CoA. It carries out the reaction (19Z,22Z,25Z,28Z)-tetratriacontatetraenoyl-CoA + malonyl-CoA + H(+) = 3-oxo-(21Z,24Z,27Z,30Z)-hexatriacontatetraenoyl-CoA + CO2 + CoA. The enzyme catalyses (21Z,24Z,27Z,30Z)-hexatriacontatetraenoyl-CoA + malonyl-CoA + H(+) = 3-oxo-(23Z,26Z,29Z,32Z)-octatriacontatetraenoyl-CoA + CO2 + CoA. The catalysed reaction is (6Z,9Z,12Z,15Z,18Z,21Z)-tetracosahexaenoyl-CoA + malonyl-CoA + H(+) = 3-oxo-(8Z,11Z,14Z,17Z,20Z,23Z)-hexacosahexaenoyl-CoA + CO2 + CoA. It catalyses the reaction (8Z,11Z,14Z,17Z,20Z,23Z)-hexacosahexaenoyl-CoA + malonyl-CoA + H(+) = 3-oxo-(10Z,13Z,16Z,19Z,22Z,25Z)-octacosahexaenoyl-CoA + CO2 + CoA. It carries out the reaction (10Z,13Z,16Z,19Z,22Z,25Z)-octacosahexaenoyl-CoA + malonyl-CoA + H(+) = 3-oxo-(12Z,15Z,18Z,21Z,24Z,27Z)-triacontahexaenoyl-CoA + CO2 + CoA. The enzyme catalyses (12Z,15Z,18Z,21Z,24Z,27Z)-triacontahexaenoyl-CoA + malonyl-CoA + H(+) = 3-oxo-(14Z,17Z,20Z,23Z,26Z,29Z)-dotriacontahexaenoyl-CoA + CO2 + CoA. The catalysed reaction is (14Z,17Z,20Z,23Z,26Z,29Z)-dotriacontahexaenoyl-CoA + malonyl-CoA + H(+) = 3-oxo-(16Z,19Z,22Z,25Z,28Z,31Z)-tetratriacontahexaenoyl-CoA + CO2 + CoA. It catalyses the reaction (16Z,19Z,22Z,25Z,28Z,31Z)-tetratriacontahexaenoyl-CoA + malonyl-CoA + H(+) = 3-oxo-(18Z,21Z,24Z,27Z,30Z,33Z)-hexatriacontahexaenoyl-CoA + CO2 + CoA. It carries out the reaction (9Z,12Z,15Z,18Z,21Z)-tetracosapentaenoyl-CoA + malonyl-CoA + H(+) = 3-oxo-(11Z,14Z,17Z,20Z,23Z)-hexacosapentaenoyl-CoA + CO2 + CoA. Its pathway is lipid metabolism; fatty acid biosynthesis. Its function is as follows. Catalyzes the first and rate-limiting reaction of the four reactions that constitute the long-chain fatty acids elongation cycle. This endoplasmic reticulum-bound enzymatic process allows the addition of 2 carbons to the chain of long- and very long-chain fatty acids (VLCFAs) per cycle. Condensing enzyme that catalyzes the synthesis of very long chain saturated (VLC-SFA) and polyunsaturated (PUFA) fatty acids that are involved in multiple biological processes as precursors of membrane lipids and lipid mediators. May play a critical role in early brain and skin development. The polypeptide is Very long chain fatty acid elongase 4 (Mus musculus (Mouse)).